A 491-amino-acid chain; its full sequence is Aspartyl/glutamyl-tRNA(Asn/Gln) amidotransferase subunit B (491 aa).

This sequence belongs to the GatB/GatE family. GatB subfamily. As to quaternary structure, heterotrimer of A, B and C subunits.

It catalyses the reaction L-glutamyl-tRNA(Gln) + L-glutamine + ATP + H2O = L-glutaminyl-tRNA(Gln) + L-glutamate + ADP + phosphate + H(+). The catalysed reaction is L-aspartyl-tRNA(Asn) + L-glutamine + ATP + H2O = L-asparaginyl-tRNA(Asn) + L-glutamate + ADP + phosphate + 2 H(+). Allows the formation of correctly charged Asn-tRNA(Asn) or Gln-tRNA(Gln) through the transamidation of misacylated Asp-tRNA(Asn) or Glu-tRNA(Gln) in organisms which lack either or both of asparaginyl-tRNA or glutaminyl-tRNA synthetases. The reaction takes place in the presence of glutamine and ATP through an activated phospho-Asp-tRNA(Asn) or phospho-Glu-tRNA(Gln). This chain is Aspartyl/glutamyl-tRNA(Asn/Gln) amidotransferase subunit B, found in Paraburkholderia xenovorans (strain LB400).